A 517-amino-acid chain; its full sequence is Splicing factor cactin (517 aa).

A compositionally biased stretch (basic and acidic residues) spans 1–14; that stretch reads MAFRDSTRDFNRSR. The segment at 1–59 is disordered; the sequence is MAFRDSTRDFNRSRPEKRHASRSSSPRSFRPSNQNARANYNLPRVRDAMKEEERSRETK. Residues 22 to 32 show a composition bias toward low complexity; it reads RSSSPRSFRPS. Basic and acidic residues predominate over residues 44–59; sequence RVRDAMKEEERSRETK.

It belongs to the CACTIN family. Interacts with sde2. Interacts with cdc5.

Functionally, plays a role in pre-mRNA splicing by facilitating excision of introns featuring long spacing between the branchpoint and 3'-splice site (ss). Recruited to the spliceosome by sde2, which may enable folding of the RNA between the BP and 3'-ss to guide the splice site towards the spliceosome's catalytic center. Assists the splicing of several components involved in chromatin organization. The chain is Splicing factor cactin from Schizosaccharomyces pombe (strain 972 / ATCC 24843) (Fission yeast).